The primary structure comprises 443 residues: Cell division protein FtsA (443 aa).

Belongs to the FtsA/MreB family. In terms of assembly, self-interacts. Interacts with FtsZ.

The protein resides in the cell inner membrane. In terms of biological role, cell division protein that is involved in the assembly of the Z ring. May serve as a membrane anchor for the Z ring. This is Cell division protein FtsA from Agrobacterium fabrum (strain C58 / ATCC 33970) (Agrobacterium tumefaciens (strain C58)).